We begin with the raw amino-acid sequence, 64 residues long: Large ribosomal subunit protein bL35 (64 aa).

It belongs to the bacterial ribosomal protein bL35 family.

The sequence is that of Large ribosomal subunit protein bL35 from Desulforamulus reducens (strain ATCC BAA-1160 / DSM 100696 / MI-1) (Desulfotomaculum reducens).